A 700-amino-acid polypeptide reads, in one-letter code: Calpain-2 catalytic subunit (700 aa).

At Ala-2 the chain carries N-acetylalanine. Positions 2–19 (AGIAAKLAKDREAAEGLG) are cleaved as a propeptide — anchors to the small subunit. Residues 45 to 344 (LFQDPSFPAL…YSRLEICNLT (300 aa)) enclose the Calpain catalytic domain. Ca(2+)-binding residues include Gly-91 and Asp-96. Cys-105 is a catalytic residue. 3 residues coordinate Ca(2+): Glu-175, Gln-229, and Lys-230. Catalysis depends on residues His-262 and Asn-286. Glu-292, Asp-299, and Glu-323 together coordinate Ca(2+). A domain III region spans residues 345-514 (PDTLTSDSYK…KKADYQVVDD (170 aa)). The tract at residues 515–529 (EIEANIDEIDISEDD) is linker. Positions 530–700 (IDDGFRRLFA…LISWLSFSVL (171 aa)) are domain IV. Positions 542, 545, 547, 552, 585, 587, 589, 591, 596, 615, 617, 619, 621, 626, 658, and 661 each coordinate Ca(2+). EF-hand domains follow at residues 572–597 (FSIETCKIMVDMLDSDGSGKLGLKEF), 602–637 (TKIQKYQKIYREIDVDRSGTMNSYEMRKALEEAGFK), and 652–672 (DDDLIIDFDNFVRCLIRLETL).

It belongs to the peptidase C2 family. Forms a heterodimer with a small (regulatory) subunit (CAPNS1). Interacts with CPEB3; this leads to cleavage of CPEB3. The cofactor is Ca(2+). Ubiquitous.

The protein localises to the cytoplasm. Its subcellular location is the cell membrane. The enzyme catalyses Broad endopeptidase specificity.. Its activity is regulated as follows. Activated by 200-1000 micromolar concentrations of calcium and inhibited by calpastatin. Calcium-regulated non-lysosomal thiol-protease which catalyzes limited proteolysis of substrates involved in cytoskeletal remodeling and signal transduction. Proteolytically cleaves MYOC at 'Arg-226'. Proteolytically cleaves CPEB3 following neuronal stimulation which abolishes CPEB3 translational repressor activity, leading to translation of CPEB3 target mRNAs. This chain is Calpain-2 catalytic subunit (CAPN2), found in Bos taurus (Bovine).